The following is a 160-amino-acid chain: SsrA-binding protein (160 aa).

The tract at residues 133–160 is disordered; it reads KKLHDKRETEKERDWNRQKSRLLKGNSQ. Over residues 137 to 149 the composition is skewed to basic and acidic residues; the sequence is DKRETEKERDWNR.

The protein belongs to the SmpB family.

It is found in the cytoplasm. Its function is as follows. Required for rescue of stalled ribosomes mediated by trans-translation. Binds to transfer-messenger RNA (tmRNA), required for stable association of tmRNA with ribosomes. tmRNA and SmpB together mimic tRNA shape, replacing the anticodon stem-loop with SmpB. tmRNA is encoded by the ssrA gene; the 2 termini fold to resemble tRNA(Ala) and it encodes a 'tag peptide', a short internal open reading frame. During trans-translation Ala-aminoacylated tmRNA acts like a tRNA, entering the A-site of stalled ribosomes, displacing the stalled mRNA. The ribosome then switches to translate the ORF on the tmRNA; the nascent peptide is terminated with the 'tag peptide' encoded by the tmRNA and targeted for degradation. The ribosome is freed to recommence translation, which seems to be the essential function of trans-translation. This is SsrA-binding protein from Agrobacterium fabrum (strain C58 / ATCC 33970) (Agrobacterium tumefaciens (strain C58)).